A 513-amino-acid polypeptide reads, in one-letter code: MGNSFGCSASGERLVSAARDGDFVEAKMLLDCNPCLAKYSTFGGLNSPLHFAAAKGHNEIVGLLLENGADVNSRNYCGQTALMQACRYGHWEVVQTLLLFRCNVTRADYLAGRTALHFAAVNGHARCIRLVLADFLPSDKLNSLPETGVVTAKNKSEQSALSKFVNKAADGGITALHMAALNGLFDCVQLLLDLEANVSAVTFHYGTSMDMIGAGSTPLHYAACGGNLKCCQILLARGARKMTLNCNGWLPIDIARMWSRHWLEPLLSPNSDVVIPAFPHSNYLSLPLLSILNIAREFGLQSATIGDEVDICAVCLERTCTVAAEGCEHQLCVRCALYLCSSSNVPSVTVGPPGSIPCPLCRHGITAFKRLPSSLTREMKLPMSLGFCAPCMLHTGDTTDQSSPTCPPTEQRSSKTRAASVSSDIFCPVTCSPFPSVNIPMCTCNEGTCPNFETHGTERHSEEHVESSPSRTTTEQEKIEEGQRLGKTTTCSSMFWGRRSCSRENQCNSEINA.

ANK repeat units lie at residues 44 to 73 (GLNS…DVNS), 77 to 106 (CGQT…NVTR), 111 to 140 (AGRT…PSDK), 171 to 200 (GGIT…NVSA), and 214 to 244 (AGST…KMTL). The segment at 312 to 362 (CAVCLERTCTVAAEGCEHQLCVRCALYLCSSSNVPSVTVGPPGSIPCPLCR) adopts an RING-type zinc-finger fold. Disordered stretches follow at residues 397–417 (DTTD…SKTR) and 455–483 (HGTE…EEGQ). 2 stretches are compositionally biased toward basic and acidic residues: residues 455–466 (HGTERHSEEHVE) and 474–483 (TEQEKIEEGQ).

The catalysed reaction is S-ubiquitinyl-[E2 ubiquitin-conjugating enzyme]-L-cysteine + [acceptor protein]-L-lysine = [E2 ubiquitin-conjugating enzyme]-L-cysteine + N(6)-ubiquitinyl-[acceptor protein]-L-lysine.. It functions in the pathway protein modification; protein ubiquitination. Possesses E3 ubiquitin-protein ligase activity when associated with the E2 enzyme UBC8 in vitro. The chain is E3 ubiquitin-protein ligase XBAT33 (XBAT33) from Arabidopsis thaliana (Mouse-ear cress).